The chain runs to 316 residues: Aspartate carbamoyltransferase catalytic subunit (316 aa).

Carbamoyl phosphate contacts are provided by R56 and T57. K84 is a binding site for L-aspartate. The carbamoyl phosphate site is built by R106, H139, and Q142. Residues R172 and R224 each coordinate L-aspartate. Positions 268 and 269 each coordinate carbamoyl phosphate.

Belongs to the aspartate/ornithine carbamoyltransferase superfamily. ATCase family. As to quaternary structure, heterododecamer (2C3:3R2) of six catalytic PyrB chains organized as two trimers (C3), and six regulatory PyrI chains organized as three dimers (R2).

The enzyme catalyses carbamoyl phosphate + L-aspartate = N-carbamoyl-L-aspartate + phosphate + H(+). It participates in pyrimidine metabolism; UMP biosynthesis via de novo pathway; (S)-dihydroorotate from bicarbonate: step 2/3. Catalyzes the condensation of carbamoyl phosphate and aspartate to form carbamoyl aspartate and inorganic phosphate, the committed step in the de novo pyrimidine nucleotide biosynthesis pathway. This Ligilactobacillus salivarius (strain UCC118) (Lactobacillus salivarius) protein is Aspartate carbamoyltransferase catalytic subunit.